The primary structure comprises 376 residues: tRNA-specific 2-thiouridylase MnmA (376 aa).

ATP-binding positions include 17–24 (GMSGGVDS) and methionine 43. The interval 103 to 105 (NPD) is interaction with target base in tRNA. Catalysis depends on cysteine 108, which acts as the Nucleophile. A disulfide bridge links cysteine 108 with cysteine 204. Glycine 132 is a binding site for ATP. An interaction with tRNA region spans residues 154–156 (KDQ). The Cysteine persulfide intermediate role is filled by cysteine 204. The interaction with tRNA stretch occupies residues 316–317 (RY).

It belongs to the MnmA/TRMU family.

Its subcellular location is the cytoplasm. The catalysed reaction is S-sulfanyl-L-cysteinyl-[protein] + uridine(34) in tRNA + AH2 + ATP = 2-thiouridine(34) in tRNA + L-cysteinyl-[protein] + A + AMP + diphosphate + H(+). Functionally, catalyzes the 2-thiolation of uridine at the wobble position (U34) of tRNA, leading to the formation of s(2)U34. The protein is tRNA-specific 2-thiouridylase MnmA of Pseudomonas syringae pv. syringae (strain B728a).